A 495-amino-acid polypeptide reads, in one-letter code: B3 domain-containing protein Os01g0234100 (495 aa).

2 disordered regions span residues 1 to 25 (MAIDQPIKKRGRPPGSKNTKNKMEQ) and 88 to 108 (PGIPQTCNTQNTSNGRTNTTE). Over residues 92–108 (QTCNTQNTSNGRTNTTE) the composition is skewed to polar residues. The segment at residues 152–243 (FVKHMLHSHV…KFKVHIIRDK (92 aa)) is a DNA-binding region (TF-B3). The segment covering 268 to 282 (EATDNATKPKEDPET) has biased composition (basic and acidic residues). The segment at 268–289 (EATDNATKPKEDPETTRVSSKV) is disordered.

It localises to the nucleus. This chain is B3 domain-containing protein Os01g0234100, found in Oryza sativa subsp. japonica (Rice).